The following is a 231-amino-acid chain: Large ribosomal subunit protein uL1 (231 aa).

It belongs to the universal ribosomal protein uL1 family. In terms of assembly, part of the 50S ribosomal subunit.

Functionally, binds directly to 23S rRNA. The L1 stalk is quite mobile in the ribosome, and is involved in E site tRNA release. Its function is as follows. Protein L1 is also a translational repressor protein, it controls the translation of the L11 operon by binding to its mRNA. The polypeptide is Large ribosomal subunit protein uL1 (Acinetobacter baylyi (strain ATCC 33305 / BD413 / ADP1)).